The primary structure comprises 393 residues: Lipid-A-disaccharide synthase (393 aa).

Belongs to the LpxB family.

It catalyses the reaction a lipid X + a UDP-2-N,3-O-bis[(3R)-3-hydroxyacyl]-alpha-D-glucosamine = a lipid A disaccharide + UDP + H(+). The protein operates within bacterial outer membrane biogenesis; LPS lipid A biosynthesis. Functionally, condensation of UDP-2,3-diacylglucosamine and 2,3-diacylglucosamine-1-phosphate to form lipid A disaccharide, a precursor of lipid A, a phosphorylated glycolipid that anchors the lipopolysaccharide to the outer membrane of the cell. This Rhodopseudomonas palustris (strain HaA2) protein is Lipid-A-disaccharide synthase.